The sequence spans 931 residues: MRKGLRATAARCGLGLGYLLQMLVLPALALLSASGTGSAAQDDDFFHELPETFPSDPPEPLPHFLIEPEEAYIVKNKPVNLYCKASPATQIYFKCNSEWVHQKDHIVDERVDETSGLIVREVSIEISRQQVEELFGPEDYWCQCVAWSSAGTTKSRKAYVRIAYLRKTFEQEPLGKEVSLEQEVLLQCRPPEGIPVAEVEWLKNEDIIDPVEDRNFYITIDHNLIIKQARLSDTANYTCVAKNIVAKRKSTTATVIVYVNGGWSTWTEWSVCNSRCGRGYQKRTRTCTNPAPLNGGAFCEGQSVQKIACTTLCPVDGRWTPWSKWSTCGTECTHWRRRECTAPAPKNGGKDCDGLVLQSKNCTDGLCMQTAPDSDDVALYVGIVIAVIVCLAISVVVALFVYRKNHRDFESDIIDSSALNGGFQPVNIKAARQDLLAVPPDLTSAAAMYRGPVYALHDVSDKIPMTNSPILDPLPNLKIKVYNTSGAVTPQDDLSEFTSKLSPQMTQSLLENEALSLKNQSLARQTDPSCTAFGSFNSLGGHLIVPNSGVSLLIPAGAIPQGRVYEMYVTVHRKETMRPPMDDSQTLLTPVVSCGPPGALLTRPVVLTMHHCADPNTEDWKILLKNQAAQGQWEDVVVVGEENFTTPCYIQLDAEACHILTENLSTYALVGHSTTKAAAKRLKLAIFGPLCCSSLEYSIRVYCLDDTQDALKEILHLERQMGGQLLEEPKALHFKGSTHNLRLSIHDIAHSLWKSKLLAKYQEIPFYHVWSGSQRNLHCTFTLERFSLNTVELVCKLCVRQVEGEGQIFQLNCTVSEEPTGIDLPLLDPANTITTVTGPSAFSIPLPIRQKLCSSLDAPQTRGHDWRMLAHKLNLDRYLNYFATKSSPTGVILDLWEAQNFPDGNLSMLAAVLEEMGRHETVVSLAAEGQY.

An N-terminal signal peptide occupies residues 1–40 (MRKGLRATAARCGLGLGYLLQMLVLPALALLSASGTGSAA). Residues 41–380 (QDDDFFHELP…APDSDDVALY (340 aa)) lie on the Extracellular side of the membrane. In terms of domain architecture, Ig-like spans 62–159 (PHFLIEPEEA…AGTTKSRKAY (98 aa)). 9 disulfide bridges follow: Cys83-Cys144, Cys95-Cys142, Cys188-Cys239, Cys272-Cys309, Cys276-Cys313, Cys287-Cys299, Cys328-Cys362, Cys332-Cys367, and Cys340-Cys352. The 96-residue stretch at 161–256 (RIAYLRKTFE…KRKSTTATVI (96 aa)) folds into the Ig-like C2-type domain. N-linked (GlcNAc...) asparagine glycosylation is present at Asn236. TSP type-1 domains lie at 260-314 (NGGW…TLCP) and 316-368 (DGRW…GLCM). An N-linked (GlcNAc...) asparagine glycan is attached at Asn361. Residues 381 to 401 (VGIVIAVIVCLAISVVVALFV) traverse the membrane as a helical segment. Over 402-931 (YRKNHRDFES…VVSLAAEGQY (530 aa)) the chain is Cytoplasmic. The required for netrin-mediated axon repulsion of neuronal growth cones stretch occupies residues 402 to 931 (YRKNHRDFES…VVSLAAEGQY (530 aa)). Ser502 bears the Phosphoserine mark. A ZU5 domain is found at 530 to 673 (CTAFGSFNSL…LSTYALVGHS (144 aa)). Tyr568 is subject to Phosphotyrosine. The interval 694-712 (SLEYSIRVYCLDDTQDALK) is interaction with DCC. In terms of domain architecture, Death spans 850–929 (QKLCSSLDAP…ETVVSLAAEG (80 aa)).

It belongs to the unc-5 family. Interacts with DCC (via cytoplasmic domain). Interacts (tyrosine phosphorylated form) with PTPN11. Interacts (via extracellular domain) with FLRT3 (via extracellular domain). Interacts (via Ig-like C2-type domain) with DSCAM (via extracellular domain). Interacts (via death domain) with DAPK1. Interacts (via cytoplasmic domain) with TUBB3; this interaction is decreased by NTN1/Netrin-1. In terms of processing, proteolytically cleaved by caspases during apoptosis. The cleavage does not take place when the receptor is associated with netrin ligand. Its cleavage by caspases is required to induce apoptosis. Phosphorylated on different cytoplasmic tyrosine residues. Phosphorylation of Tyr-568 leads to an interaction with PTPN11 phosphatase, suggesting that its activity is regulated by phosphorylation/dephosphorylation. Tyrosine phosphorylation is netrin-dependent. As to expression, mainly expressed in brain. Expressed in temporal lobe cortical neurons and in neurons of the hippocampal pyramidal layer. Also expressed in kidney. Not expressed in developing or adult lung.

It localises to the cell membrane. It is found in the cell surface. The protein localises to the synapse. The protein resides in the synaptosome. Its subcellular location is the cell projection. It localises to the axon. It is found in the dendrite. The protein localises to the growth cone. The protein resides in the lamellipodium. Its subcellular location is the filopodium. Functionally, receptor for netrin required for axon guidance. Mediates axon repulsion of neuronal growth cones in the developing nervous system upon ligand binding. NTN1/Netrin-1 binding might cause dissociation of UNC5C from polymerized TUBB3 in microtubules and thereby lead to increased microtubule dynamics and axon repulsion. Axon repulsion in growth cones may also be caused by its association with DCC that may trigger signaling for repulsion. Might also collaborate with DSCAM in NTN1-mediated axon repulsion independently of DCC. Also involved in corticospinal tract axon guidance independently of DCC. Involved in dorsal root ganglion axon projection towards the spinal cord. It also acts as a dependence receptor required for apoptosis induction when not associated with netrin ligand. The chain is Netrin receptor UNC5C (UNC5C) from Homo sapiens (Human).